A 280-amino-acid polypeptide reads, in one-letter code: Shikimate dehydrogenase (NADP(+)) (280 aa).

Residues 20–22 (SLS) and Thr67 contribute to the shikimate site. Residue Lys71 is the Proton acceptor of the active site. Glu83 is an NADP(+) binding site. 2 residues coordinate shikimate: Asn92 and Asp107. Residues 131 to 135 (GAGGA), 155 to 160 (NRTLNK), and Leu224 contribute to the NADP(+) site. A shikimate-binding site is contributed by Tyr226. Gly247 is a binding site for NADP(+).

It belongs to the shikimate dehydrogenase family. Homodimer.

It carries out the reaction shikimate + NADP(+) = 3-dehydroshikimate + NADPH + H(+). It participates in metabolic intermediate biosynthesis; chorismate biosynthesis; chorismate from D-erythrose 4-phosphate and phosphoenolpyruvate: step 4/7. Its function is as follows. Involved in the biosynthesis of the chorismate, which leads to the biosynthesis of aromatic amino acids. Catalyzes the reversible NADPH linked reduction of 3-dehydroshikimate (DHSA) to yield shikimate (SA). In Caldanaerobacter subterraneus subsp. tengcongensis (strain DSM 15242 / JCM 11007 / NBRC 100824 / MB4) (Thermoanaerobacter tengcongensis), this protein is Shikimate dehydrogenase (NADP(+)).